Reading from the N-terminus, the 311-residue chain is Urease accessory protein UreD 2 (311 aa).

The protein belongs to the UreD family. In terms of assembly, ureD, UreF and UreG form a complex that acts as a GTP-hydrolysis-dependent molecular chaperone, activating the urease apoprotein by helping to assemble the nickel containing metallocenter of UreC. The UreE protein probably delivers the nickel.

The protein localises to the cytoplasm. In terms of biological role, required for maturation of urease via the functional incorporation of the urease nickel metallocenter. The polypeptide is Urease accessory protein UreD 2 (Methylorubrum extorquens (strain PA1) (Methylobacterium extorquens)).